The sequence spans 326 residues: tRNA-modifying protein YgfZ (326 aa).

Residues W27 and W189 each contribute to the folate site.

It belongs to the tRNA-modifying YgfZ family.

The protein resides in the cytoplasm. Functionally, folate-binding protein involved in regulating the level of ATP-DnaA and in the modification of some tRNAs. It is probably a key factor in regulatory networks that act via tRNA modification, such as initiation of chromosomal replication. This chain is tRNA-modifying protein YgfZ, found in Escherichia coli O6:H1 (strain CFT073 / ATCC 700928 / UPEC).